Consider the following 225-residue polypeptide: Uridylate kinase (225 aa).

9–10 (GS) contributes to the ATP binding site. Residue G44 participates in UMP binding. Residues G45 and R49 each coordinate ATP. UMP contacts are provided by residues D66 and 114–120 (THPGHTT). The ATP site is built by T140, N141, Y146, and D149.

Belongs to the UMP kinase family. As to quaternary structure, homohexamer.

The protein localises to the cytoplasm. The catalysed reaction is UMP + ATP = UDP + ADP. The protein operates within pyrimidine metabolism; CTP biosynthesis via de novo pathway; UDP from UMP (UMPK route): step 1/1. Inhibited by UTP. In terms of biological role, catalyzes the reversible phosphorylation of UMP to UDP. The sequence is that of Uridylate kinase from Thermococcus kodakarensis (strain ATCC BAA-918 / JCM 12380 / KOD1) (Pyrococcus kodakaraensis (strain KOD1)).